The chain runs to 81 residues: Large ribosomal subunit protein bL31 (81 aa).

It belongs to the bacterial ribosomal protein bL31 family. Type A subfamily. Part of the 50S ribosomal subunit.

Its function is as follows. Binds the 23S rRNA. This Fusobacterium nucleatum subsp. nucleatum (strain ATCC 25586 / DSM 15643 / BCRC 10681 / CIP 101130 / JCM 8532 / KCTC 2640 / LMG 13131 / VPI 4355) protein is Large ribosomal subunit protein bL31 (rpmE).